Here is a 142-residue protein sequence, read N- to C-terminus: Putative pre-16S rRNA nuclease (142 aa).

This sequence belongs to the YqgF nuclease family.

The protein resides in the cytoplasm. Its function is as follows. Could be a nuclease involved in processing of the 5'-end of pre-16S rRNA. In Malacoplasma penetrans (strain HF-2) (Mycoplasma penetrans), this protein is Putative pre-16S rRNA nuclease.